The sequence spans 135 residues: Small ribosomal subunit protein uS8 (135 aa).

Belongs to the universal ribosomal protein uS8 family. In terms of assembly, part of the 30S ribosomal subunit. Contacts proteins S5 and S12.

Its function is as follows. One of the primary rRNA binding proteins, it binds directly to 16S rRNA central domain where it helps coordinate assembly of the platform of the 30S subunit. This is Small ribosomal subunit protein uS8 from Cutibacterium acnes (strain DSM 16379 / KPA171202) (Propionibacterium acnes).